The sequence spans 436 residues: Gamma-glutamyl phosphate reductase (436 aa).

It belongs to the gamma-glutamyl phosphate reductase family.

The protein resides in the cytoplasm. The catalysed reaction is L-glutamate 5-semialdehyde + phosphate + NADP(+) = L-glutamyl 5-phosphate + NADPH + H(+). The protein operates within amino-acid biosynthesis; L-proline biosynthesis; L-glutamate 5-semialdehyde from L-glutamate: step 2/2. Its function is as follows. Catalyzes the NADPH-dependent reduction of L-glutamate 5-phosphate into L-glutamate 5-semialdehyde and phosphate. The product spontaneously undergoes cyclization to form 1-pyrroline-5-carboxylate. The protein is Gamma-glutamyl phosphate reductase of Prochlorococcus marinus (strain MIT 9301).